Consider the following 33-residue polypeptide: Photosystem II reaction center protein Psb30 (33 aa).

A helical membrane pass occupies residues 8–28; the sequence is QLTALAFIVLSGPLVIALLAF.

It belongs to the Psb30/Ycf12 family. In terms of assembly, PSII is composed of 1 copy each of membrane proteins PsbA, PsbB, PsbC, PsbD, PsbE, PsbF, PsbH, PsbI, PsbJ, PsbK, PsbL, PsbM, PsbT, PsbX, PsbY, PsbZ, Psb30/Ycf12, peripheral proteins of the oxygen-evolving complex and a large number of cofactors. It forms dimeric complexes.

It is found in the plastid. The protein resides in the chloroplast thylakoid membrane. A core subunit of photosystem II (PSII), probably helps stabilize the reaction center. The chain is Photosystem II reaction center protein Psb30 from Staurastrum punctulatum (Green alga).